Reading from the N-terminus, the 487-residue chain is Photosystem II CP43 reaction center protein (487 aa).

The propeptide occupies 1–28; the sequence is MKVFVLGWLLKINLMKTLYSQRRFYHVE. Helical transmembrane passes span 83–107, 148–169, 192–214, 269–289, and 305–326; these read LFEV…PHLA, LIGP…RDKN, KSLF…RFVS, KPFA…LSYS, and WYNN…ASQA. Position 381 (Glu381) interacts with [CaMn4O5] cluster. The helical transmembrane segment at 461 to 485 threads the bilayer; it reads RARAAAAGFEKGINRENEPVLSMRP.

The protein belongs to the PsbB/PsbC family. PsbC subfamily. In terms of assembly, PSII is composed of 1 copy each of membrane proteins PsbA, PsbB, PsbC, PsbD, PsbE, PsbF, PsbH, PsbI, PsbJ, PsbK, PsbL, PsbM, PsbT, PsbX, PsbY, PsbZ, Psb30/Ycf12, at least 3 peripheral proteins of the oxygen-evolving complex and a large number of cofactors. It forms dimeric complexes. It depends on Binds multiple chlorophylls and provides some of the ligands for the Ca-4Mn-5O cluster of the oxygen-evolving complex. It may also provide a ligand for a Cl- that is required for oxygen evolution. PSII binds additional chlorophylls, carotenoids and specific lipids. as a cofactor.

The protein resides in the plastid. It is found in the chloroplast thylakoid membrane. Functionally, one of the components of the core complex of photosystem II (PSII). It binds chlorophyll and helps catalyze the primary light-induced photochemical processes of PSII. PSII is a light-driven water:plastoquinone oxidoreductase, using light energy to abstract electrons from H(2)O, generating O(2) and a proton gradient subsequently used for ATP formation. This chain is Photosystem II CP43 reaction center protein, found in Porphyra purpurea (Red seaweed).